Consider the following 138-residue polypeptide: Sporulation-specific protein 13 (138 aa).

A compositionally biased stretch (polar residues) spans 1–11; sequence MMSNSQISKLF. The segment at 1 to 31 is disordered; it reads MMSNSQISKLFSSISNKENSNENALKESTNK. The span at 12-23 shows a compositional bias: low complexity; it reads SSISNKENSNEN. Positions 16–104 form a coiled coil; sequence NKENSNENAL…KRELDYLRAK (89 aa).

As to quaternary structure, interacts with spo2.

It is found in the cytoplasm. The protein resides in the cytoskeleton. The protein localises to the microtubule organizing center. Its subcellular location is the spindle pole body. Its function is as follows. Involved in sporulation. Plays a significant role in modification of the spindle pole body prior to spore formation and is required for initiating forespore membrane formation. This is Sporulation-specific protein 13 (spo13) from Schizosaccharomyces pombe (strain 972 / ATCC 24843) (Fission yeast).